The sequence spans 1333 residues: Elongator complex protein 1 (1333 aa).

Phosphoserine occurs at positions 805, 868, 1172, and 1175. The interval 886–1333 (VDVNELYDHS…KTQWKLSLLE (448 aa)) is mediates dimerization. The segment at 1177–1209 (SEMSSKYSHSNSRISARSSKNRRKAERKKHSLK) is disordered. The required for binding to tRNA stretch occupies residues 1192–1210 (ARSSKNRRKAERKKHSLKE). Over residues 1195-1207 (SKNRRKAERKKHS) the composition is skewed to basic residues.

It belongs to the ELP1/IKA1 family. In terms of assembly, homodimer; dimerization promotes ELP1 stability and elongator complex formation. Component of the elongator complex which consists of ELP1, ELP2, ELP3, ELP4, ELP5 and ELP6. Interacts preferentially with MAP3K14/NIK followed by IKK-alpha and IKK-beta. Phosphorylated.

Its subcellular location is the cytoplasm. The protein resides in the nucleus. It functions in the pathway tRNA modification; 5-methoxycarbonylmethyl-2-thiouridine-tRNA biosynthesis. In terms of biological role, component of the elongator complex which is required for multiple tRNA modifications, including mcm5U (5-methoxycarbonylmethyl uridine), mcm5s2U (5-methoxycarbonylmethyl-2-thiouridine), and ncm5U (5-carbamoylmethyl uridine). The elongator complex catalyzes the formation of carboxymethyluridine in the wobble base at position 34 in tRNAs. Regulates the migration and branching of projection neurons in the developing cerebral cortex, through a process depending on alpha-tubulin acetylation. ELP1 binds to tRNA, mediating interaction of the elongator complex with tRNA. May act as a scaffold protein that assembles active IKK-MAP3K14 complexes (IKKA, IKKB and MAP3K14/NIK). The protein is Elongator complex protein 1 (ELP1) of Oryctolagus cuniculus (Rabbit).